The chain runs to 293 residues: 33 kDa chaperonin (293 aa).

Cystine bridges form between Cys-238–Cys-240 and Cys-271–Cys-274.

The protein belongs to the HSP33 family. In terms of processing, under oxidizing conditions two disulfide bonds are formed involving the reactive cysteines. Under reducing conditions zinc is bound to the reactive cysteines and the protein is inactive.

It is found in the cytoplasm. Redox regulated molecular chaperone. Protects both thermally unfolding and oxidatively damaged proteins from irreversible aggregation. Plays an important role in the bacterial defense system toward oxidative stress. The sequence is that of 33 kDa chaperonin from Clostridium beijerinckii (strain ATCC 51743 / NCIMB 8052) (Clostridium acetobutylicum).